We begin with the raw amino-acid sequence, 280 residues long: Succinate dehydrogenase [ubiquinone] iron-sulfur subunit, mitochondrial (280 aa).

The transit peptide at 1 to 28 (MAAVVALSLRRRLPATTLGGACLQASRG) directs the protein to the mitochondrion. The 2Fe-2S ferredoxin-type domain maps to 40-133 (KKFAIYRWDP…VSKIYPLPHM (94 aa)). 2 positions are modified to N6-acetyllysine: Lys51 and Lys55. Cys93, Cys98, Cys101, and Cys113 together coordinate [2Fe-2S] cluster. Positions 146 to 218 (FYAQYKSIEP…PAVLMQAYRW (73 aa)) are interaction with SDHAF1. In terms of domain architecture, 4Fe-4S ferredoxin-type spans 176-206 (EREKLDGLYECILCACCSTSCPSYWWNGDKY). [4Fe-4S] cluster contacts are provided by Cys186, Cys189, and Cys192. A [3Fe-4S] cluster-binding site is contributed by Cys196. Trp201 serves as a coordination point for a ubiquinone. The [3Fe-4S] cluster site is built by Cys243 and Cys249. Position 253 (Cys253) interacts with [4Fe-4S] cluster.

It belongs to the succinate dehydrogenase/fumarate reductase iron-sulfur protein family. Component of complex II composed of four subunits: the flavoprotein (FP) SDHA, iron-sulfur protein (IP) SDHB, and a cytochrome b560 composed of SDHC and SDHD. Interacts with SDHAF1; the interaction is required for iron-sulfur cluster incorporation into SDHB. In terms of assembly, (Microbial infection) Interacts with JC virus small t antigen. It depends on [2Fe-2S] cluster as a cofactor. The cofactor is [3Fe-4S] cluster. [4Fe-4S] cluster is required as a cofactor.

The protein resides in the mitochondrion inner membrane. It catalyses the reaction a quinone + succinate = fumarate + a quinol. The enzyme catalyses (R)-malate + a quinone = enol-oxaloacetate + a quinol. The catalysed reaction is (S)-malate + a quinone = enol-oxaloacetate + a quinol. It participates in carbohydrate metabolism; tricarboxylic acid cycle; fumarate from succinate (eukaryal route): step 1/1. Its activity is regulated as follows. Enol-oxaloacetate inhibits the succinate dehydrogenase activity. Iron-sulfur protein (IP) subunit of the succinate dehydrogenase complex (mitochondrial respiratory chain complex II), responsible for transferring electrons from succinate to ubiquinone (coenzyme Q). SDH also oxidizes malate to the non-canonical enol form of oxaloacetate, enol-oxaloacetate. Enol-oxaloacetate, which is a potent inhibitor of the succinate dehydrogenase activity, is further isomerized into keto-oxaloacetate. The polypeptide is Succinate dehydrogenase [ubiquinone] iron-sulfur subunit, mitochondrial (SDHB) (Homo sapiens (Human)).